A 206-amino-acid polypeptide reads, in one-letter code: High frequency lysogenization protein HflD homolog (206 aa).

This sequence belongs to the HflD family.

The protein resides in the cytoplasm. The protein localises to the cell inner membrane. This is High frequency lysogenization protein HflD homolog from Marinobacter nauticus (strain ATCC 700491 / DSM 11845 / VT8) (Marinobacter aquaeolei).